The following is a 177-amino-acid chain: Co-chaperone protein HscB homolog (177 aa).

Positions 8-80 (DYFSLFGMPR…LSRAQYLLEL (73 aa)) constitute a J domain.

The protein belongs to the HscB family. In terms of assembly, interacts with HscA and stimulates its ATPase activity.

Its function is as follows. Co-chaperone involved in the maturation of iron-sulfur cluster-containing proteins. Seems to help targeting proteins to be folded toward HscA. The polypeptide is Co-chaperone protein HscB homolog (Azoarcus sp. (strain BH72)).